Consider the following 128-residue polypeptide: MQRHMLKSKIHRAAVTHCELHYEGSCAIDEDLLEAANLVENERIDIWNINNGERFSTYAIKGERGSGMISLNGSAARRAQLGDLVIIAAFAMVDEAELQAGWKPKLVFIDEGNKIKGHRDHVPTQNWT.

Residue S25 is the Schiff-base intermediate with substrate; via pyruvic acid of the active site. At S25 the chain carries Pyruvic acid (Ser). T57 serves as a coordination point for substrate. Y58 (proton donor) is an active-site residue. Residue 73-75 (GSA) participates in substrate binding.

It belongs to the PanD family. Heterooctamer of four alpha and four beta subunits. It depends on pyruvate as a cofactor. Is synthesized initially as an inactive proenzyme, which is activated by self-cleavage at a specific serine bond to produce a beta-subunit with a hydroxyl group at its C-terminus and an alpha-subunit with a pyruvoyl group at its N-terminus.

The protein resides in the cytoplasm. The enzyme catalyses L-aspartate + H(+) = beta-alanine + CO2. It participates in cofactor biosynthesis; (R)-pantothenate biosynthesis; beta-alanine from L-aspartate: step 1/1. In terms of biological role, catalyzes the pyruvoyl-dependent decarboxylation of aspartate to produce beta-alanine. This Burkholderia ambifaria (strain ATCC BAA-244 / DSM 16087 / CCUG 44356 / LMG 19182 / AMMD) (Burkholderia cepacia (strain AMMD)) protein is Aspartate 1-decarboxylase.